Reading from the N-terminus, the 289-residue chain is E3 ubiquitin-protein ligase MARCHF5 (289 aa).

Residues 4–73 (VDEPPEKHCW…PQCGTEYRIV (70 aa)) form an RING-CH-type zinc finger. Residues Cys-12, Cys-15, Cys-31, Cys-33, His-41, Cys-44, Cys-63, and Cys-66 each contribute to the Zn(2+) site. The next 4 membrane-spanning stretches (helical) occupy residues 97–117 (FAAA…YGAV), 137–157 (PLFL…GKMI), 202–222 (LSVS…NLVG), and 236–256 (TILG…YFKQ).

The protein resides in the mitochondrion outer membrane. It is found in the endoplasmic reticulum membrane. It catalyses the reaction S-ubiquitinyl-[E2 ubiquitin-conjugating enzyme]-L-cysteine + [acceptor protein]-L-lysine = [E2 ubiquitin-conjugating enzyme]-L-cysteine + N(6)-ubiquitinyl-[acceptor protein]-L-lysine.. It functions in the pathway protein modification; protein ubiquitination. In terms of biological role, mitochondrial E3 ubiquitin-protein ligase that plays a crucial role in the control of mitochondrial morphology by acting as a positive regulator of mitochondrial fission. May play a role in the prevention of cell senescence acting as a regulator of mitochondrial quality control. This Danio rerio (Zebrafish) protein is E3 ubiquitin-protein ligase MARCHF5 (marchf5).